The chain runs to 151 residues: Alpha-latroinsectotoxin-Lh1a (151 aa).

8 ANK repeats span residues 21–37 (TDVT…DLNA), 41–52 (ILIRNTNAVINI), 56–80 (VGLT…YLND), 84–104 (NGMT…VDFL), 105–116 (KWTPLHLAILFK), 117–125 (QLVIELLAK), 126–146 (TFFD…AVEK), and 147–151 (YIAAR).

It belongs to the cationic peptide 01 (latrotoxin) family. 02 (alpha-latroinsectotoxin) subfamily. In terms of assembly, homotetramer in membranes. In terms of tissue distribution, expressed by the venom gland.

It localises to the secreted. The protein localises to the target cell membrane. In terms of biological role, insecticidal presynaptic neurotoxin that induces massive neurotransmitter release at insect (but not vertebrate) neuromuscular junctions. Native toxin forms cation-permeable pores (with high permeability to calcium) in lipid membranes locust muscle membrane and artificial lipid bilayers. May bind to insect neurexin-1 homolog, insect adhesion G protein-coupled receptor L1 homolog, and insect receptor-type tyrosine-protein phosphatase S homolog, and induces neurotransmitter exocytosis both by forming tetrameric pores in membranes and signaling via G protein-coupled receptor. Oligomerization is a process independent of divalent cations. The toxin forms channels with 0.55-0.58 nm entrance diameter and a relatively small conductance in planar phospholipid membranes. The protein is Alpha-latroinsectotoxin-Lh1a of Latrodectus hasselti (Redback spider).